Reading from the N-terminus, the 356-residue chain is Zinc finger CW-type PWWP domain protein 2 (356 aa).

The segment at 24–79 (MYVNKVWVQCENENCLKWRLLSSEDSAKVDHDEPWYCFMNTDSRYNNCSISEEDFP) adopts a CW-type zinc-finger fold. Zn(2+) is bound by residues cysteine 33, cysteine 38, cysteine 60, and cysteine 71. The PWWP domain occupies 98-162 (LGSLVLVKLQ…ATFVGHYSIT (65 aa)). Positions 279 to 307 (QALQPTATPDESEEGHGEEINMGEKLSKC) are disordered.

Functionally, histone methylation reader which binds to non-methylated (H3K4me0), monomethylated (H3K4me1), dimethylated (H3K4me2) and trimethylated (H3K4me3) 'Lys-4' on histone H3. The order of binding preference is H3K4me3 &gt; H3K4me2 &gt; H3K4me1 &gt; H3K4me0. The sequence is that of Zinc finger CW-type PWWP domain protein 2 (ZCWPW2) from Homo sapiens (Human).